The chain runs to 67 residues: Phycobilisome 7.8 kDa linker polypeptide, allophycocyanin-associated, core (67 aa).

Residues 1–56 (MRMFKITACVPSQTRIRTQRELQNTYFTKLVPYENWFREQQRIQKMGGKIVKVELF) enclose the CpcD-like domain.

It belongs to the phycobilisome linker protein family.

It localises to the cellular thylakoid membrane. Its function is as follows. Rod linker protein, associated with allophycocyanin. Linker polypeptides determine the state of aggregation and the location of the disk-shaped phycobiliprotein units within the phycobilisome and modulate their spectroscopic properties in order to mediate a directed and optimal energy transfer. The chain is Phycobilisome 7.8 kDa linker polypeptide, allophycocyanin-associated, core (apcC) from Thermosynechococcus vestitus (strain NIES-2133 / IAM M-273 / BP-1).